The sequence spans 211 residues: Probable nicotinate-nucleotide adenylyltransferase (211 aa).

Belongs to the NadD family.

The enzyme catalyses nicotinate beta-D-ribonucleotide + ATP + H(+) = deamido-NAD(+) + diphosphate. It participates in cofactor biosynthesis; NAD(+) biosynthesis; deamido-NAD(+) from nicotinate D-ribonucleotide: step 1/1. Functionally, catalyzes the reversible adenylation of nicotinate mononucleotide (NaMN) to nicotinic acid adenine dinucleotide (NaAD). This chain is Probable nicotinate-nucleotide adenylyltransferase, found in Lactiplantibacillus plantarum (strain ATCC BAA-793 / NCIMB 8826 / WCFS1) (Lactobacillus plantarum).